A 436-amino-acid chain; its full sequence is MYHPRELYPSLGAGYRLGPAQPGADSSFPPALAEGYRYPELDTPKLDCFLSGMEAAPRTLAAHPPLPLLPPAMGTEPAPSAPEALHSLPGVSLSLENRELWKEFSSVGTEMIITKAGRRMFPACRVSVTGLDPEARYLFLLDVIPVDGARYRWQGRRWEPSGKAEPRLPDRVYIHPDSPATGAHWMRQPVSFHRVKLTNSTLDPHGHLILHSMHKYQPRIHLVRAAQLCSQHWGGMASFRFPETTFISVTAYQNPQITQLKIAANPFAKGFRENGRNCKRERDARVKRKLRGPEPAATEAYGSGDTPGGPCDSTLGGDIRESDPEQAPAPGEATAAPAPLCGGPSAEAYLLHPAAFHGAPSHLPTRSPSFPEAPDSGRSAPYSAAFLELPHGSGGSGYPAAPPAVPFAPHFLQGGPFPLPYTAPGGYLDVGSKPMY.

Residues 100-273 (LWKEFSSVGT…ANPFAKGFRE (174 aa)) constitute a DNA-binding region (T-box). Residues 271–284 (FRENGRNCKRERDA) are compositionally biased toward basic and acidic residues. Disordered regions lie at residues 271–339 (FREN…APAP) and 360–379 (PSHL…SGRS). Positions 325–339 (EQAPAPGEATAAPAP) are enriched in low complexity.

As to quaternary structure, forms a dimeric complex with DNA (in vitro). Expressed in fetal tail bud, posterior spinal tissue, intervertebral disk and testis. Also expressed in adult testis, kidney, lung, muscle and thymus.

It localises to the nucleus. Functionally, T-box transcription factor that plays an essential role in the determination of the fate of axial stem cells: neural vs mesodermal. Acts in part by down-regulating, a specific enhancer (N1) of SOX2, to inhibit neural development. Seems to play also an essential role in left/right axis determination and acts through effects on Notch signaling around the node as well as through an effect on the morphology and motility of the nodal cilia. This chain is T-box transcription factor TBX6 (TBX6), found in Homo sapiens (Human).